We begin with the raw amino-acid sequence, 153 residues long: Prefoldin subunit alpha (153 aa).

The protein belongs to the prefoldin subunit alpha family. In terms of assembly, heterohexamer of two alpha and four beta subunits.

It is found in the cytoplasm. Molecular chaperone capable of stabilizing a range of proteins. Seems to fulfill an ATP-independent, HSP70-like function in archaeal de novo protein folding. The sequence is that of Prefoldin subunit alpha from Methanothrix thermoacetophila (strain DSM 6194 / JCM 14653 / NBRC 101360 / PT) (Methanosaeta thermophila).